The sequence spans 97 residues: Putative membrane protein insertion efficiency factor (97 aa).

Belongs to the UPF0161 family.

The protein resides in the cell inner membrane. In terms of biological role, could be involved in insertion of integral membrane proteins into the membrane. The polypeptide is Putative membrane protein insertion efficiency factor (Chlamydia muridarum (strain MoPn / Nigg)).